Here is a 2287-residue protein sequence, read N- to C-terminus: Protein Ycf2 (2287 aa).

1632-1639 is an ATP binding site; that stretch reads GSIGTGRS.

This sequence belongs to the Ycf2 family.

The protein localises to the plastid. It localises to the chloroplast stroma. In terms of biological role, probable ATPase of unknown function. Its presence in a non-photosynthetic plant (Epifagus virginiana) and experiments in tobacco indicate that it has an essential function which is probably not related to photosynthesis. This chain is Protein Ycf2, found in Calycanthus floridus var. glaucus (Eastern sweetshrub).